We begin with the raw amino-acid sequence, 531 residues long: CCA tRNA nucleotidyltransferase, mitochondrial (531 aa).

It belongs to the tRNA nucleotidyltransferase/poly(A) polymerase family.

It localises to the mitochondrion. It is found in the cytoplasm. The protein resides in the nucleus. The enzyme catalyses a tRNA precursor + 2 CTP + ATP = a tRNA with a 3' CCA end + 3 diphosphate. Nucleotidyltransferase that catalyzes the addition and repair of the essential 3'-terminal CCA sequence in tRNAs, which is necessary for the attachment of amino acids to the 3' terminus of tRNA molecules, using CTP and ATP as substrates. tRNA 3'-terminal CCA addition is required both for tRNA processing and repair. Also involved in tRNA surveillance by mediating tandem CCA addition to generate a CCACCA at the 3' terminus of unstable tRNAs. While stable tRNAs receive only 3'-terminal CCA, unstable tRNAs are marked with CCACCA and rapidly degraded. The structural flexibility of RNA controls the choice between CCA versus CCACCA addition: following the first CCA addition cycle, nucleotide-binding to the active site triggers a clockwise screw motion, producing torque on the RNA. This ejects stable RNAs, whereas unstable RNAs are refolded while bound to the enzyme and subjected to a second CCA catalytic cycle. This chain is CCA tRNA nucleotidyltransferase, mitochondrial (CCA1), found in Candida glabrata (strain ATCC 2001 / BCRC 20586 / JCM 3761 / NBRC 0622 / NRRL Y-65 / CBS 138) (Yeast).